A 156-amino-acid polypeptide reads, in one-letter code: ATP synthase subunit b (156 aa).

A helical transmembrane segment spans residues 7-27; it reads LFLQAVVFAILVWFTMKFVWP.

The protein belongs to the ATPase B chain family. F-type ATPases have 2 components, F(1) - the catalytic core - and F(0) - the membrane proton channel. F(1) has five subunits: alpha(3), beta(3), gamma(1), delta(1), epsilon(1). F(0) has three main subunits: a(1), b(2) and c(10-14). The alpha and beta chains form an alternating ring which encloses part of the gamma chain. F(1) is attached to F(0) by a central stalk formed by the gamma and epsilon chains, while a peripheral stalk is formed by the delta and b chains.

It localises to the cell inner membrane. F(1)F(0) ATP synthase produces ATP from ADP in the presence of a proton or sodium gradient. F-type ATPases consist of two structural domains, F(1) containing the extramembraneous catalytic core and F(0) containing the membrane proton channel, linked together by a central stalk and a peripheral stalk. During catalysis, ATP synthesis in the catalytic domain of F(1) is coupled via a rotary mechanism of the central stalk subunits to proton translocation. Functionally, component of the F(0) channel, it forms part of the peripheral stalk, linking F(1) to F(0). This chain is ATP synthase subunit b, found in Polaromonas naphthalenivorans (strain CJ2).